A 124-amino-acid chain; its full sequence is Large ribosomal subunit protein eL22y (124 aa).

Belongs to the eukaryotic ribosomal protein eL22 family.

This chain is Large ribosomal subunit protein eL22y (RPL22C), found in Arabidopsis thaliana (Mouse-ear cress).